We begin with the raw amino-acid sequence, 258 residues long: MSLKDSAKIALSLMDLTTLNDNDTDEKVIALCQQGKTEFGTPAAVCVYPRFVPIARKALKAQGTEQVKIATVTNFPHGNDDIDIAVAETKAAVAYGADEVDVVFPYKALMAGNEQIGFELVQQCKAVCQASNVLLKVIIETGELKTAELIRKASEISIKAGADFIKTSTGKVPVNATLESARIMLETIRDLKVADRVGFKAAGGVKTAEEAAQYLALAQEILGHDWVNSDHFRFGASSLLTNLLAALNGQANQKVSGY.

The Proton donor/acceptor role is filled by Asp101. The Schiff-base intermediate with acetaldehyde role is filled by Lys166. Lys200 functions as the Proton donor/acceptor in the catalytic mechanism.

The protein belongs to the DeoC/FbaB aldolase family. DeoC type 2 subfamily.

It localises to the cytoplasm. It catalyses the reaction 2-deoxy-D-ribose 5-phosphate = D-glyceraldehyde 3-phosphate + acetaldehyde. It participates in carbohydrate degradation; 2-deoxy-D-ribose 1-phosphate degradation; D-glyceraldehyde 3-phosphate and acetaldehyde from 2-deoxy-alpha-D-ribose 1-phosphate: step 2/2. Functionally, catalyzes a reversible aldol reaction between acetaldehyde and D-glyceraldehyde 3-phosphate to generate 2-deoxy-D-ribose 5-phosphate. The chain is Deoxyribose-phosphate aldolase from Actinobacillus pleuropneumoniae serotype 3 (strain JL03).